The sequence spans 54 residues: Photoreceptor disk component PRCD (54 aa).

Cys2 is lipidated: S-palmitoyl cysteine. Residues 25–54 (PEPSDVDGAARGSSLDADPQSSGREKEPLK) are disordered.

This sequence belongs to the PRCD family. As to quaternary structure, interacts with RHO/rhodopsin; the interaction promotes PRCD stability. In terms of processing, palmitoylated at Cys-2. Palmitoylation is essential for protein stability and trafficking to the photoreceptor outer segment, but does not appear to be essential for membrane localization. Probably palmitoylated by ZDHHC3. Phosphorylated.

It is found in the cell projection. The protein localises to the cilium. It localises to the photoreceptor outer segment. Its subcellular location is the membrane. The protein resides in the endoplasmic reticulum. It is found in the golgi apparatus. Its function is as follows. Involved in vision. This is Photoreceptor disk component PRCD from Homo sapiens (Human).